A 1310-amino-acid chain; its full sequence is Multidrug resistance protein 4 (1310 aa).

Transmembrane regions (helical) follow at residues 48–68 (WLDL…GVLT), 125–145 (MVCF…CFFV), 196–216 (KFGI…IGFA), 223–243 (LVIM…AVFA), and 299–319 (GLTV…AFSL). The 314-residue stretch at 55 to 368 (AVGIFGSIGC…IAIPLNIFAT (314 aa)) folds into the ABC transmembrane type-1 1 domain. An N-linked (GlcNAc...) asparagine glycan is attached at N336. A helical transmembrane segment spans residues 342-362 (VMIVFICVLIATQGLSIIAIP). Residue N402 is glycosylated (N-linked (GlcNAc...) asparagine). The region spanning 403-642 (ITLEDVQFRY…KGTYYGLVKR (240 aa)) is the ABC transporter 1 domain. 438-445 (GASGCGKS) is an ATP binding site. N608 is a glycosylation site (N-linked (GlcNAc...) asparagine). A run of 2 helical transmembrane segments spans residues 721–741 (WFLS…FPFF) and 773–793 (IIVV…IGLF). One can recognise an ABC transmembrane type-1 2 domain in the interval 722 to 1030 (FLSTFGFIGG…LGNIVPDIGK (309 aa)). Residue N816 is glycosylated (N-linked (GlcNAc...) asparagine). The next 3 membrane-spanning stretches (helical) occupy residues 849–869 (VGNV…AFYY), 871–891 (WKVS…VFIN), and 945–965 (IGIY…TLLT). In terms of domain architecture, ABC transporter 2 spans 1065–1304 (IEFKDICFRY…KGFYYTLAMQ (240 aa)). Residue 1100–1107 (GASGCGKS) coordinates ATP.

This sequence belongs to the ABC transporter superfamily. ABCB family. Multidrug resistance exporter (TC 3.A.1.201) subfamily.

It localises to the membrane. It catalyses the reaction ATP + H2O + xenobioticSide 1 = ADP + phosphate + xenobioticSide 2.. Energy-dependent efflux pump responsible for decreased drug accumulation in multidrug resistance parasites. The chain is Multidrug resistance protein 4 from Entamoeba histolytica (strain ATCC 30459 / HM-1:IMSS / ABRM).